The primary structure comprises 203 residues: Guanylate kinase (203 aa).

Positions 5–183 constitute a Guanylate kinase-like domain; the sequence is GVLYIISAPS…AVEELKSVVV (179 aa). 12–19 lines the ATP pocket; that stretch reads APSGAGKT.

The protein belongs to the guanylate kinase family.

Its subcellular location is the cytoplasm. It carries out the reaction GMP + ATP = GDP + ADP. In terms of biological role, essential for recycling GMP and indirectly, cGMP. This chain is Guanylate kinase, found in Geobacter metallireducens (strain ATCC 53774 / DSM 7210 / GS-15).